Reading from the N-terminus, the 556-residue chain is Peptide chain release factor 3 (556 aa).

Residues 28–297 (QQRRNFAIIS…AFLDYALKPG (270 aa)) enclose the tr-type G domain. Residues 37–44 (SHPDAGKT), 105–109 (DTPGH), and 159–162 (NKMD) each bind GTP.

Belongs to the TRAFAC class translation factor GTPase superfamily. Classic translation factor GTPase family. PrfC subfamily.

Its subcellular location is the cytoplasm. Its function is as follows. Increases the formation of ribosomal termination complexes and stimulates activities of RF-1 and RF-2. It binds guanine nucleotides and has strong preference for UGA stop codons. It may interact directly with the ribosome. The stimulation of RF-1 and RF-2 is significantly reduced by GTP and GDP, but not by GMP. This is Peptide chain release factor 3 from Synechococcus elongatus (strain ATCC 33912 / PCC 7942 / FACHB-805) (Anacystis nidulans R2).